Here is a 92-residue protein sequence, read N- to C-terminus: MTYSRKKNPFVANNLLKKINKLNRKAKKEIIITWSRGSTIIPIMIGHTIAIHNGKEHLPIYIMDDMVGHKLGEFAATLNFRGHEKGDNKSRR.

This sequence belongs to the universal ribosomal protein uS19 family.

The protein localises to the plastid. Protein S19 forms a complex with S13 that binds strongly to the 16S ribosomal RNA. This chain is Small ribosomal subunit protein uS19c, found in Cuscuta obtusiflora (Peruvian dodder).